The primary structure comprises 520 residues: 6-phosphofructo-2-kinase/fructose-2,6-bisphosphatase 3 (520 aa).

Residues 1-245 are 6-phosphofructo-2-kinase; it reads MPLELTQSRV…VYYLMNIHVQ (245 aa). 42–50 is an ATP binding site; sequence GLPARGKTY. R75 and R99 together coordinate beta-D-fructose 6-phosphate. D125 is an active-site residue. Residues T127 and R133 each contribute to the beta-D-fructose 6-phosphate site. The active site involves C155. 164–169 provides a ligand contact to ATP; the sequence is NIMEVK. K169, R190, and Y194 together coordinate beta-D-fructose 6-phosphate. Residues 246-520 form a fructose-2,6-bisphosphatase region; that stretch reads PRTIYLCRHG…RSSADSSRKH (275 aa). R253 contacts beta-D-fructose 2,6-bisphosphate. H254 (tele-phosphohistidine intermediate) is an active-site residue. The beta-D-fructose 2,6-bisphosphate site is built by N260 and G266. The active-site Proton donor/acceptor is E323. Beta-D-fructose 2,6-bisphosphate contacts are provided by Y334, R348, K352, Y363, Q389, and R393. 345–348 is an ATP binding site; it reads YALR. ATP-binding positions include 389–393 and Y425; that span reads QAVLR. Positions 443–520 are disordered; it reads RERSEDAKKG…RSSADSSRKH (78 aa). S461 carries the phosphoserine; by AMPK modification. Residue T463 is modified to Phosphothreonine. S467 carries the post-translational modification Phosphoserine. Phosphothreonine; by PKC is present on T471. A compositionally biased stretch (polar residues) spans 502 to 520; sequence LPGQNMKGSRSSADSSRKH.

The protein in the C-terminal section; belongs to the phosphoglycerate mutase family. As to quaternary structure, homodimer. Forms a heterodimer with PFKFB2. In terms of processing, phosphorylation by AMPK stimulates activity. In terms of tissue distribution, ubiquitous.

The catalysed reaction is beta-D-fructose 2,6-bisphosphate + H2O = beta-D-fructose 6-phosphate + phosphate. It carries out the reaction beta-D-fructose 6-phosphate + ATP = beta-D-fructose 2,6-bisphosphate + ADP + H(+). Its function is as follows. Catalyzes both the synthesis and degradation of fructose 2,6-bisphosphate. In Homo sapiens (Human), this protein is 6-phosphofructo-2-kinase/fructose-2,6-bisphosphatase 3 (PFKFB3).